The sequence spans 86 residues: Large ribosomal subunit protein eL43 (86 aa).

The C4-type zinc-finger motif lies at Cys-38–Cys-59.

This sequence belongs to the eukaryotic ribosomal protein eL43 family. The cofactor is Zn(2+).

The chain is Large ribosomal subunit protein eL43 from Thermococcus onnurineus (strain NA1).